Reading from the N-terminus, the 445-residue chain is UPF0210 protein SPT_0285 (445 aa).

This sequence belongs to the UPF0210 family. In terms of assembly, homodimer.

The chain is UPF0210 protein SPT_0285 from Streptococcus pneumoniae (strain Taiwan19F-14).